The sequence spans 103 residues: 4-amino-4-deoxychorismate mutase (103 aa).

The Chorismate mutase domain maps to 1–92 (MTEQNELQRL…EMCRVEDLVM (92 aa)).

The catalysed reaction is 4-amino-4-deoxychorismate = 4-amino-4-deoxyprephenate. It functions in the pathway antibiotic biosynthesis. Its function is as follows. Involved in chloramphenicol biosynthesis. Probably catalyzes the conversion of 4-amino-4-deoxychorismate to 4-amino-4-deoxyprephenate. This Streptomyces venezuelae (strain ATCC 10712 / CBS 650.69 / DSM 40230 / JCM 4526 / NBRC 13096 / PD 04745) protein is 4-amino-4-deoxychorismate mutase.